We begin with the raw amino-acid sequence, 432 residues long: Adenylosuccinate synthetase (432 aa).

Residues 13-19 and 41-43 each bind GTP; these read GDEGKGK and GHT. The active-site Proton acceptor is the Asp14. Positions 14 and 41 each coordinate Mg(2+). Residues 14–17, 39–42, Thr131, Arg145, Gln226, Thr241, and Arg305 contribute to the IMP site; these read DEGK and NAGH. The active-site Proton donor is the His42. Position 301–307 (301–307) interacts with substrate; that stretch reads SVTGRAR. GTP is bound by residues Arg307, 333–335, and 416–418; these read KLD and STG.

It belongs to the adenylosuccinate synthetase family. In terms of assembly, homodimer. The cofactor is Mg(2+).

Its subcellular location is the cytoplasm. It catalyses the reaction IMP + L-aspartate + GTP = N(6)-(1,2-dicarboxyethyl)-AMP + GDP + phosphate + 2 H(+). The protein operates within purine metabolism; AMP biosynthesis via de novo pathway; AMP from IMP: step 1/2. In terms of biological role, plays an important role in the de novo pathway of purine nucleotide biosynthesis. Catalyzes the first committed step in the biosynthesis of AMP from IMP. The protein is Adenylosuccinate synthetase of Neisseria meningitidis serogroup C (strain 053442).